Here is a 311-residue protein sequence, read N- to C-terminus: Ribosomal RNA small subunit methyltransferase H (311 aa).

S-adenosyl-L-methionine-binding positions include 33 to 35 (GGH), aspartate 51, phenylalanine 78, aspartate 99, and glutamine 106. The segment at 289-311 (EEIEKNRRAHSAKLRAAEKLSFA) is disordered.

Belongs to the methyltransferase superfamily. RsmH family.

The protein resides in the cytoplasm. The enzyme catalyses cytidine(1402) in 16S rRNA + S-adenosyl-L-methionine = N(4)-methylcytidine(1402) in 16S rRNA + S-adenosyl-L-homocysteine + H(+). In terms of biological role, specifically methylates the N4 position of cytidine in position 1402 (C1402) of 16S rRNA. The sequence is that of Ribosomal RNA small subunit methyltransferase H from Carboxydothermus hydrogenoformans (strain ATCC BAA-161 / DSM 6008 / Z-2901).